Here is a 759-residue protein sequence, read N- to C-terminus: 1,4-alpha-glucan branching enzyme GlgB (759 aa).

Residues 1–22 (MAKTKGLPKDTAVTPSPHLRPH) are disordered. The active-site Nucleophile is aspartate 422. Glutamate 475 (proton donor) is an active-site residue.

The protein belongs to the glycosyl hydrolase 13 family. GlgB subfamily. As to quaternary structure, monomer.

The catalysed reaction is Transfers a segment of a (1-&gt;4)-alpha-D-glucan chain to a primary hydroxy group in a similar glucan chain.. The protein operates within glycan biosynthesis; glycogen biosynthesis. Its function is as follows. Catalyzes the formation of the alpha-1,6-glucosidic linkages in glycogen by scission of a 1,4-alpha-linked oligosaccharide from growing alpha-1,4-glucan chains and the subsequent attachment of the oligosaccharide to the alpha-1,6 position. This Mycobacterium sp. (strain KMS) protein is 1,4-alpha-glucan branching enzyme GlgB.